Reading from the N-terminus, the 318-residue chain is MSNCGKHFGPEQLEKWPELESVTLMEALAREDIDEAVYAILFRENCIAKRLDTYFQHLDAFKERKKELLHKKWTENVAKPLQQRIMEKVISYKALEKTKQENFEYFLKHTNKTEIIFGDFYDPEVYNPFYMTKKDPNYGKVAVPPFCDPLFIRQQEIDEEQRAVFQYTTGKRCTLKEFKELEKARQYARLPQFTFSLHSMVSKDRPKAFARPVGSKTHSKCSPEKLVCAEEKFPPYKVKMTSDVNQTVFERRFYSSKISQESKRHEKKGLALGTGQHRPRSWAAGEGQQRRRSQPVDRRVMTAEVLGQHLAALQLGDR.

Residues 259–297 (SQESKRHEKKGLALGTGQHRPRSWAAGEGQQRRRSQPVD) form a disordered region.

It belongs to the FAM228 family.

In Bos taurus (Bovine), this protein is Protein FAM228A (FAM228A).